We begin with the raw amino-acid sequence, 445 residues long: Cyclin-B1-2 (445 aa).

Belongs to the cyclin family. Cyclin AB subfamily. In terms of assembly, interacts with FZR2/CCS52A1, FZR1/CCS52A2 and FZR3/CCS52B. As to expression, expressed in roots, stems and flowers.

In terms of biological role, may induce mitotic cell division. The polypeptide is Cyclin-B1-2 (CYCB1-2) (Arabidopsis thaliana (Mouse-ear cress)).